The primary structure comprises 81 residues: Lantipeptide prochlorosin 1.1 (81 aa).

Positions 1-65 are excised as a propeptide; the sequence is MSEEQLKAFI…DDDLEGVAGG (65 aa). Residues 68-72 constitute a cross-link (beta-methyllanthionine (Cys-Thr)); it reads CVQGT. Positions 77–81 form a cross-link, beta-methyllanthionine (Thr-Cys); the sequence is TINVC.

Post-translationally, cross-links are proved in vitro, when coepressed in E.coli with the ProcM lanthionine synthetase. In terms of processing, the beta-methyllanthionine residues have a DL configuration (with 2S,3S,6R stereochemistry). Maturation of prochlorosin involves the enzymatic conversion of Thr, and Ser into dehydrated AA and the formation of thioether bonds with cysteines. This is followed by membrane translocation and cleavage of the modified precursor.

The protein localises to the secreted. In terms of biological role, lanthionine-containing peptide (lantipeptide) with unknown function. Does not show antibiotic activity against Lactococcus lactis 117 and Bacillus subtilis 6633 bacteria. Organisms that produce this peptide live in oligotrophic environments at very dilute concentrations, suggesting this peptide is not secreted to influence other bacteria. The chain is Lantipeptide prochlorosin 1.1 from Prochlorococcus marinus (strain MIT 9313).